Consider the following 427-residue polypeptide: Endothelin-1 receptor (427 aa).

The first 20 residues, 1 to 20 (METFCFRVSFWVALLGCVIS), serve as a signal peptide directing secretion. At 21 to 80 (DNPESHSTNLSTHVDDFTTFRGTEFSLVVTTHRPTNLALPSNGSMHNYCPQQTKITSAFK) the chain is on the extracellular side. Asparagine 29 and asparagine 62 each carry an N-linked (GlcNAc...) asparagine glycan. A helical membrane pass occupies residues 81-102 (YINTVISCTIFIVGMVGNATLL). At 103–112 (RIIYQNKCMR) the chain is on the cytoplasmic side. A helical membrane pass occupies residues 113-132 (NGPNALIASLALGDLIYVVI). The Extracellular segment spans residues 133 to 159 (DLPINVFKLLAGRWPFENHDFGVFLCK). Cysteine 158 and cysteine 239 form a disulfide bridge. A helical transmembrane segment spans residues 160–181 (LFPFLQKSSVGITVLNLCALSV). The Cytoplasmic segment spans residues 182 to 205 (DRYRAVASWSRVQGIGIPLVTAIE). The helical transmembrane segment at 206–229 (IVSIWILSFILAIPEAIGFVMVPF) threads the bilayer. Over 230-256 (EYKGEEHKTCMLNATSKFMEFYQDVKD) the chain is Extracellular. A helical transmembrane segment spans residues 257–278 (WWLFGFYFCMPLVCTAIFYTLM). Residues 279–306 (TCEMLNRRNGSLRIALSEHLKQRREVAK) lie on the Cytoplasmic side of the membrane. The helical transmembrane segment at 307 to 328 (TVFCLVVIFALCWFPLHLSRIL) threads the bilayer. Residues 329–347 (KKTVYDEMDKNRCELLSFL) lie on the Extracellular side of the membrane. Residues 348–372 (LLMDYIGINLATMNSCINPIALYFV) traverse the membrane as a helical segment. Residues 373–427 (SKKFKNCFQSCLCCCCYQSKSLMTSVPMNGTSIQWKNHEQNNHNTERSSHKDSIN) lie on the Cytoplasmic side of the membrane. Serine 425 carries the post-translational modification Phosphoserine.

The protein belongs to the G-protein coupled receptor 1 family. Endothelin receptor subfamily. EDNRA sub-subfamily. As to quaternary structure, interacts with HDAC7 and KAT5.

The protein resides in the cell membrane. Receptor for endothelin-1. Mediates its action by association with G proteins that activate a phosphatidylinositol-calcium second messenger system. The rank order of binding affinities for ET-A is: ET1 &gt; ET2 &gt;&gt; ET3. The polypeptide is Endothelin-1 receptor (Sus scrofa (Pig)).